A 266-amino-acid chain; its full sequence is Pyridoxal phosphate phosphatase YigL (266 aa).

Aspartate 8 serves as the catalytic Nucleophile. Aspartate 8 contributes to the Mg(2+) binding site. Phosphate is bound at residue leucine 9. Aspartate 10 contacts Mg(2+). Phosphate is bound by residues threonine 42–glycine 43 and lysine 191. Residue aspartate 214 participates in Mg(2+) binding. Residue asparagine 217 coordinates phosphate.

It belongs to the HAD-like hydrolase superfamily. Cof family. It depends on Mg(2+) as a cofactor. The cofactor is Mn(2+). Requires Co(2+) as cofactor. Zn(2+) serves as cofactor.

The catalysed reaction is pyridoxal 5'-phosphate + H2O = pyridoxal + phosphate. It carries out the reaction sugar phosphate + H2O = sugar + phosphate.. Functionally, catalyzes Strongly the dephosphorylation of pyridoxal-phosphate (PLP) and moderately the dephosphorylation of 2-deoxyglucose 6-phosphate (2bGLU6P) and beta-glucose 6-phosphate (bGlu6P). Also hydrolyzes both purines (GMP and IMP) and pyrimidines as secondary substrates. In Escherichia coli (strain K12), this protein is Pyridoxal phosphate phosphatase YigL (yigL).